Consider the following 281-residue polypeptide: Diaminopimelate epimerase (281 aa).

Substrate-binding residues include asparagine 13 and asparagine 66. The active-site Proton donor is cysteine 75. Substrate-binding positions include 76-77 (GN), asparagine 164, asparagine 197, and 215-216 (ER). Cysteine 224 (proton acceptor) is an active-site residue. 225–226 (GT) provides a ligand contact to substrate.

Belongs to the diaminopimelate epimerase family. As to quaternary structure, homodimer.

It is found in the cytoplasm. The catalysed reaction is (2S,6S)-2,6-diaminopimelate = meso-2,6-diaminopimelate. It functions in the pathway amino-acid biosynthesis; L-lysine biosynthesis via DAP pathway; DL-2,6-diaminopimelate from LL-2,6-diaminopimelate: step 1/1. Catalyzes the stereoinversion of LL-2,6-diaminopimelate (L,L-DAP) to meso-diaminopimelate (meso-DAP), a precursor of L-lysine and an essential component of the bacterial peptidoglycan. This Picosynechococcus sp. (strain ATCC 27264 / PCC 7002 / PR-6) (Agmenellum quadruplicatum) protein is Diaminopimelate epimerase.